Here is a 348-residue protein sequence, read N- to C-terminus: Inosamine-phosphate amidinotransferase 1 (348 aa).

Residues Asp-179 and His-227 contribute to the active site. Cys-332 functions as the Amidino-cysteine intermediate in the catalytic mechanism.

It belongs to the amidinotransferase family. As to quaternary structure, homodimer.

The enzyme catalyses 1-amino-1-deoxy-scyllo-inositol 4-phosphate + L-arginine = 1-guanidino-1-deoxy-scyllo-inositol 4-phosphate + L-ornithine. The protein operates within antibiotic biosynthesis; streptomycin biosynthesis. Functionally, catalyzes two non-consecutive transamidination reactions. It converts scyllo-inosamine 4-phosphate into N-amidino-scyllo-inosamine 4-phosphate and N1-amidinostreptamine 6-phosphate into streptidine 6-phosphate. The sequence is that of Inosamine-phosphate amidinotransferase 1 (strB1) from Streptomyces glaucescens.